The chain runs to 255 residues: Indole-3-glycerol phosphate synthase (255 aa).

It belongs to the TrpC family.

It catalyses the reaction 1-(2-carboxyphenylamino)-1-deoxy-D-ribulose 5-phosphate + H(+) = (1S,2R)-1-C-(indol-3-yl)glycerol 3-phosphate + CO2 + H2O. It functions in the pathway amino-acid biosynthesis; L-tryptophan biosynthesis; L-tryptophan from chorismate: step 4/5. This Streptococcus mutans serotype c (strain ATCC 700610 / UA159) protein is Indole-3-glycerol phosphate synthase.